Here is an 80-residue protein sequence, read N- to C-terminus: uncharacterized protein (80 aa).

The protein belongs to the BolA/IbaG family.

This is an uncharacterized protein from Buchnera aphidicola subsp. Acyrthosiphon pisum (strain APS) (Acyrthosiphon pisum symbiotic bacterium).